The following is a 1194-amino-acid chain: Probable disease resistance protein RPP1 (1194 aa).

The tract at residues 1-27 (MGSVMSLGCSKRKATNQDVDSESRKRR) is disordered. Positions 96 to 260 (WKHDVFPSFH…KISTDVSNML (165 aa)) constitute a TIR domain. 105 to 110 (HGADVR) provides a ligand contact to NAD(+). The active site involves glutamate 171. The NB-ARC domain maps to 280–535 (DMLEQLLRLD…ACLFNGESTT (256 aa)). LRR repeat units follow at residues 623-647 (LSNT…HFVR), 658-681 (QLAL…GYES), 690-713 (PEFL…TKQL), 714-737 (RNLK…STAT), 739-760 (LEEL…IEKL), 761-784 (TSLQ…ENAT), 786-807 (LREL…IGTA), 808-831 (TNLK…IGDI), 832-855 (TDLE…IGNL), 866-878 (CSKL…NINL), 879-899 (KSLD…PEIS), 900-922 (THIS…IMSW), 943-965 (FDII…VKRM), and 966-991 (SRLR…SLDY). A disordered region spans residues 1170–1194 (RRSSSPDLSPESSRVSSYDHCLRGD). The span at 1171-1185 (RSSSPDLSPESSRVS) shows a compositional bias: low complexity.

The protein belongs to the disease resistance TIR-NB-LRR family.

It catalyses the reaction NAD(+) + H2O = ADP-D-ribose + nicotinamide + H(+). TIR-NB-LRR receptor-like protein that confers resistance to the pathogen Hyaloperonospora arabidopsis. Probably acts as a NAD(+) hydrolase (NADase): in response to activation, catalyzes cleavage of NAD(+) into ADP-D-ribose (ADPR) and nicotinamide; NAD(+) cleavage triggering a defense system that promotes cell death. In Arabidopsis thaliana (Mouse-ear cress), this protein is Probable disease resistance protein RPP1.